The chain runs to 787 residues: MAQSNWEADKMLDVYIYDYLVKKKLHNTAKSFMTEGKVSPDPVAIDAPGGFLFEWWSVFWDIFIARTNEKHSEAAAAYIEAQQGKAKEQQMQIQQLQMMRQAQMQRRDPNHPSLGGPMNAIGSEGMIGQSNASALAAKMYEERMKQPNPMNSETSQPHLDARMALLKSATNHHGQIVQGNHQGGVSAALQQIQSRTQQPTEIKTEVNLGTSPRQLPVDPSTVYGQGILQSKPGMGSAGLNPGVSGLPLKGWPLTGIEQMRPGLGGPQVQKSFLQNQSQFQLSPQQQQHQMLAQVQAQGNMTNSPMYGGDMDPRRFTGLPRGNLNPKDGQQNANDGSIGSPMQSSSSKHISMPPVQQSSSQQQDHLLSQQSQQNNRKRKGPSSSGPANSTGTGNTVGPSNSQPSTPSTHTPVDGVAIAGNMHHVNSMPKGPMMYGSDGIGGLASSANQLLQDDMDQFGDVGALEDNVESFLSQDDGDGGSLFGTLKRNSSVHTETSKPFSFNEVSCIRKSASKVICCSFSYDGKLLASAGHDKKVFIWNMETLQVESTPEEHAHIITDVRFRPNSTQLATSSFDKTIKIWDASDPGYFLRTISGHAAPVMSIDFHPKKTELLCSCDSNNDIRFWDINASCVRAVKGASTQVRFQPRTGQFLAAASENTVSIFDIENNNKRVNIFKGHSSNVHSVCWSPNGELVASVSEDAVKLWSLSSGDCIHELSNSGNKFHSVVFHPSYPDLLVIGGYQAIELWNTMENKCMTVAGHECVISALAQSPSTGVVASASHDKSVKIWK.

The required for SEU-binding stretch occupies residues 1 to 88 (MAQSNWEADK…IEAQQGKAKE (88 aa)). The region spanning 8–40 (ADKMLDVYIYDYLVKKKLHNTAKSFMTEGKVSP) is the LisH domain. Residues 77-106 (AYIEAQQGKAKEQQMQIQQLQMMRQAQMQR) are a coiled coil. The segment at 299 to 413 (NMTNSPMYGG…TPSTHTPVDG (115 aa)) is disordered. 2 stretches are compositionally biased toward low complexity: residues 336-346 (SIGSPMQSSSS) and 355-372 (QQSS…QSQQ). Over residues 380–409 (PSSSGPANSTGTGNTVGPSNSQPSTPSTHT) the composition is skewed to polar residues. WD repeat units lie at residues 508–547 (KSAS…VEST), 550–589 (EHAH…YFLR), 593–633 (GHAA…VRAV), 635–671 (GAST…KRVN), 675–715 (GHSS…HELS), 717–755 (SGNK…CMTV), and 757–787 (GHEC…KIWK).

In terms of assembly, forms corepressor complexes with SLK1 and SLK2; LUH is the transcription repressor subunit and SLK1 and SLK2 the specific DNA-binding adapters. Interacts with SEU. Binds to YAB3, YAB5 and YAB1/FIL; these complexes promote adaxial cell identity in leaves as well as embryonic shoot apical meristem (SAM) initiation and postembryonic SAM maintenance. In terms of tissue distribution, expressed in roots, stems, leaves, seedlings, apex, flowers, siliques, flower organs and seeds (including seed coat).

It localises to the nucleus. Its function is as follows. Transcription repressor subunit of the SEU-SLK1 and SEU-SLK2 transcriptional corepressor of abiotic stress (e.g. salt and osmotic stress) response genes, by means of an epigenetic process involving histone modification (e.g. H3K9 and H3K14 acetylation), probably by recruiting HDAC, to facilitate the condensation of chromatin thus preventing transcription at the target genes. Can also act as a transcription activator. Implicated in embryo and floral development. Involved in post-synthesis cell wall modifications necessary for mucilage extrusion from seeds upon imbibition, probably by promoting the expression of genes required for mucilage maturation (e.g. MUM2). Regulates the maintenance on leaf polarity and meristem activity as well as the initiation of embryonic shoot apical meristem (SAM) development. The protein is Transcriptional corepressor LEUNIG_HOMOLOG of Arabidopsis thaliana (Mouse-ear cress).